The primary structure comprises 87 residues: MYLIELALKLSPLPLSVQRKKLEDAKALYNQLKESLKKGDPRLLEISCEQVEDKKIAVLVSEVLAVQMYEKTAGAGGNRRPGFSFDE.

It belongs to the UPF0367 family.

The polypeptide is UPF0367 protein Pro_0144 (Prochlorococcus marinus (strain SARG / CCMP1375 / SS120)).